The sequence spans 384 residues: PqqA peptide cyclase (384 aa).

Positions V5–A220 constitute a Radical SAM core domain. 3 residues coordinate [4Fe-4S] cluster: C19, C23, and C26.

The protein belongs to the radical SAM superfamily. PqqE family. In terms of assembly, interacts with PqqD. The interaction is necessary for activity of PqqE. [4Fe-4S] cluster is required as a cofactor.

It carries out the reaction [PQQ precursor protein] + S-adenosyl-L-methionine = E-Y cross-linked-[PQQ precursor protein] + 5'-deoxyadenosine + L-methionine + H(+). Its pathway is cofactor biosynthesis; pyrroloquinoline quinone biosynthesis. Catalyzes the cross-linking of a glutamate residue and a tyrosine residue in the PqqA protein as part of the biosynthesis of pyrroloquinoline quinone (PQQ). The protein is PqqA peptide cyclase of Acinetobacter baumannii (strain ACICU).